The primary structure comprises 1076 residues: Enhancer of mRNA-decapping protein 4-like protein pdc1 (1076 aa).

Composition is skewed to low complexity over residues 1–19 (MNEQ…LPNL) and 53–69 (SSLL…SNQS). 3 disordered regions span residues 1–82 (MNEQ…ASHS), 95–127 (GAKP…FNPV), and 139–204 (STGP…AEEQ). Positions 70-82 (PSNSGPKYYASHS) are enriched in polar residues. Positions 153-173 (NDSQDTAFQSSRNMPSDTSVA) are enriched in polar residues. Low complexity predominate over residues 174 to 184 (SPDYSHSQSSS). Residues 185–195 (PIANYQESGNS) are compositionally biased toward polar residues. 2 WD repeats span residues 292 to 334 (NSPN…STSE) and 402 to 441 (DTGI…PSTP). 2 disordered regions span residues 666–714 (RHST…SPSS) and 892–934 (TAPD…PAQG). Over residues 669-688 (TASPSTVNSGFSTPRSQATG) the composition is skewed to polar residues. Phosphoserine occurs at positions 671 and 673. Phosphothreonine is present on Thr674. A compositionally biased stretch (basic and acidic residues) spans 695–706 (DKGERFETKDKS). An interaction with dcp2 region spans residues 789-1076 (MQVALKEEIA…ISEISVASSN (288 aa)). Ser1075 carries the phosphoserine modification.

This sequence belongs to the WD repeat EDC4 family. Interacts with dcp2; via C-terminus.

It localises to the cytoplasm. The protein localises to the P-body. In terms of biological role, involved in P-body formation. Acts as a functional homolog of human EDC4, which plays a role in mRNA decapping in the process of mRNA degradation. Enhances the decapping activity of dcp2. Together with edc3, acts as a scaffolding protein sufficient for the phase transition of the components of the 5' to 3' mRNA degradation machinery to form P-bodies. Intermolecular interactions between the edc3 Sm domain and at least 10 helical leucine-rich motifs in dcp2 and pdc1 build the core of the interaction network of this spontaneous clustering process. The polypeptide is Enhancer of mRNA-decapping protein 4-like protein pdc1 (Schizosaccharomyces pombe (strain 972 / ATCC 24843) (Fission yeast)).